Here is a 102-residue protein sequence, read N- to C-terminus: Large ribosomal subunit protein bL21 (102 aa).

The protein belongs to the bacterial ribosomal protein bL21 family. In terms of assembly, part of the 50S ribosomal subunit. Contacts protein L20.

This protein binds to 23S rRNA in the presence of protein L20. In Campylobacter hominis (strain ATCC BAA-381 / DSM 21671 / CCUG 45161 / LMG 19568 / NCTC 13146 / CH001A), this protein is Large ribosomal subunit protein bL21.